We begin with the raw amino-acid sequence, 261 residues long: Putative cysteine protease YopT-like y4zC (261 aa).

The segment covering 1-15 has biased composition (polar residues); the sequence is MHSPISGSFTSSTQV. 2 disordered regions span residues 1–48 and 54–73; these read MHSP…CPDK and SKPQASDPNNPSTSSPARPS. The segment covering 61 to 73 has biased composition (low complexity); it reads PNNPSTSSPARPS. Catalysis depends on residues C93, H205, and D220.

The protein belongs to the peptidase C58 family.

Its function is as follows. Potential cysteine protease, which may play a central role after invasion of host cell. This chain is Putative cysteine protease YopT-like y4zC, found in Sinorhizobium fredii (strain NBRC 101917 / NGR234).